The chain runs to 694 residues: Elongation factor G (694 aa).

Residues 10 to 285 (EKTRNIGIMA…AVLDYLPSPV (276 aa)) form the tr-type G domain. GTP-binding positions include 19–26 (AHIDAGKT), 83–87 (DTPGH), and 137–140 (NKMD).

It belongs to the TRAFAC class translation factor GTPase superfamily. Classic translation factor GTPase family. EF-G/EF-2 subfamily.

The protein resides in the cytoplasm. Catalyzes the GTP-dependent ribosomal translocation step during translation elongation. During this step, the ribosome changes from the pre-translocational (PRE) to the post-translocational (POST) state as the newly formed A-site-bound peptidyl-tRNA and P-site-bound deacylated tRNA move to the P and E sites, respectively. Catalyzes the coordinated movement of the two tRNA molecules, the mRNA and conformational changes in the ribosome. This chain is Elongation factor G, found in Limosilactobacillus fermentum (strain NBRC 3956 / LMG 18251) (Lactobacillus fermentum).